The sequence spans 79 residues: Conotoxin VnMEKL-024 (79 aa).

Residues 1 to 19 form the signal peptide; that stretch reads MQKLTILLLVAAVLMSTQA. Residues 20–50 constitute a propeptide that is removed on maturation; that stretch reads LIRGGVEKRQEAKRNFFSKRKTTAESWWEGE. Disulfide bonds link cysteine 51–cysteine 65, cysteine 58–cysteine 69, and cysteine 64–cysteine 76.

This sequence belongs to the conotoxin O2 superfamily. As to expression, expressed by the venom duct.

Its subcellular location is the secreted. The chain is Conotoxin VnMEKL-024 from Conus ventricosus (Mediterranean cone).